A 118-amino-acid polypeptide reads, in one-letter code: Large ribosomal subunit protein bL20 (118 aa).

The protein belongs to the bacterial ribosomal protein bL20 family.

Its function is as follows. Binds directly to 23S ribosomal RNA and is necessary for the in vitro assembly process of the 50S ribosomal subunit. It is not involved in the protein synthesizing functions of that subunit. The sequence is that of Large ribosomal subunit protein bL20 from Lacticaseibacillus casei (strain BL23) (Lactobacillus casei).